We begin with the raw amino-acid sequence, 33 residues long: Large ribosomal subunit protein eL21 (33 aa).

This sequence belongs to the eukaryotic ribosomal protein eL21 family. Component of the large ribosomal subunit.

Its subcellular location is the cytoplasm. The protein resides in the cytosol. It localises to the endoplasmic reticulum. Functionally, component of the large ribosomal subunit. The ribosome is a large ribonucleoprotein complex responsible for the synthesis of proteins in the cell. The protein is Large ribosomal subunit protein eL21 (rpl21) of Xenopus laevis (African clawed frog).